Reading from the N-terminus, the 286-residue chain is Polyamine aminopropyltransferase (286 aa).

Positions D2–K237 constitute a PABS domain. Q31 contributes to the S-methyl-5'-thioadenosine binding site. D86 contacts spermidine. Residues E106 and N137–G138 each bind S-methyl-5'-thioadenosine. Residue D155 is the Proton acceptor of the active site.

This sequence belongs to the spermidine/spermine synthase family. In terms of assembly, homodimer or homotetramer.

The protein localises to the cytoplasm. The enzyme catalyses S-adenosyl 3-(methylsulfanyl)propylamine + putrescine = S-methyl-5'-thioadenosine + spermidine + H(+). The protein operates within amine and polyamine biosynthesis; spermidine biosynthesis; spermidine from putrescine: step 1/1. Catalyzes the irreversible transfer of a propylamine group from the amino donor S-adenosylmethioninamine (decarboxy-AdoMet) to putrescine (1,4-diaminobutane) to yield spermidine. This is Polyamine aminopropyltransferase from Streptococcus pneumoniae serotype 4 (strain ATCC BAA-334 / TIGR4).